Reading from the N-terminus, the 364-residue chain is Autophagy-related protein 14 (364 aa).

The interval 5-20 (CPICETQSHVFYCAHC) is cysteine repeats. Residues 38-114 (LGKINNALRN…QDRRIKEKSR (77 aa)) adopt a coiled-coil conformation.

Belongs to the ATG14 family. Component of the autophagy-specific VPS34 PI3-kinase complex I composed of VPS15, VPS30, VPS34, ATG14 and ATG38. Interacts directly with ATG38.

The protein localises to the preautophagosomal structure membrane. Its subcellular location is the vacuole membrane. Its function is as follows. Required for cytoplasm to vacuole transport (Cvt) and autophagy as a part of the autophagy-specific VPS34 PI3-kinase complex I. This complex is essential to recruit the ATG8-phosphatidylinositol conjugate and the ATG12-ATG5 conjugate to the pre-autophagosomal structure. ATG14 mediates the specific binding of the VPS34 PI3-kinase complex I to the preautophagosomal structure (PAS). Required for survival and/or proliferation in kidneys and in brain. The chain is Autophagy-related protein 14 from Candida glabrata (strain ATCC 2001 / BCRC 20586 / JCM 3761 / NBRC 0622 / NRRL Y-65 / CBS 138) (Yeast).